We begin with the raw amino-acid sequence, 527 residues long: Laccase-5 (527 aa).

The signal sequence occupies residues Met1–Gly23. A Plastocyanin-like 1 domain is found at Ile25 to Tyr150. Asn74 and Asn77 each carry an N-linked (GlcNAc...) asparagine glycan. 4 residues coordinate Cu cation: His87, His89, His132, and His134. Intrachain disulfides connect Cys108/Cys516 and Cys140/Cys230. Residues Asn156, Asn209, Asn233, Asn242, Asn276, Asn317, Asn358, Asn366, Asn393, and Asn402 are each glycosylated (N-linked (GlcNAc...) asparagine). The region spanning Val162–Tyr306 is the Plastocyanin-like 2 domain. The Plastocyanin-like 3 domain maps to Thr373–Asp498. Positions 425, 428, 430, 480, 481, 482, and 486 each coordinate Cu cation.

It belongs to the multicopper oxidase family. The cofactor is Cu cation.

The protein resides in the secreted. The enzyme catalyses 4 hydroquinone + O2 = 4 benzosemiquinone + 2 H2O. Lignin degradation and detoxification of lignin-derived products. This is Laccase-5 (LCC5) from Trametes versicolor (White-rot fungus).